Consider the following 131-residue polypeptide: Profilin-4 (131 aa).

An intrachain disulfide couples Cys13 to Cys115. The short motif at 81–97 (AVIRGKKGAGGITVKKT) is the Involved in PIP2 interaction element. Thr111 is modified (phosphothreonine).

It belongs to the profilin family. In terms of assembly, occurs in many kinds of cells as a complex with monomeric actin in a 1:1 ratio. Post-translationally, phosphorylated by MAP kinases.

The protein localises to the cytoplasm. It is found in the cytoskeleton. Functionally, binds to actin and affects the structure of the cytoskeleton. At high concentrations, profilin prevents the polymerization of actin, whereas it enhances it at low concentrations. This is Profilin-4 from Olea europaea (Common olive).